The chain runs to 305 residues: Serine/threonine-protein kinase 16 (305 aa).

Residue glycine 2 is the site of N-myristoyl glycine attachment. 2 S-palmitoyl cysteine lipidation sites follow: cysteine 6 and cysteine 8. Residues 20–293 enclose the Protein kinase domain; it reads YLFVQKLGEG…PVLLSQLEAL (274 aa). Residues 26–34 and lysine 49 each bind ATP; that span reads LGEGGFSYV. Aspartate 148 (proton acceptor) is an active-site residue. The activation loop stretch occupies residues 166–202; it reads DLGSMNQACIQVEGSRQALALQDWAAQRCTISYRAPE. A Phosphoserine; by autocatalysis modification is found at serine 197. Phosphotyrosine; by autocatalysis is present on tyrosine 198.

It belongs to the protein kinase superfamily. Ser/Thr protein kinase family. In terms of assembly, monomer. Interacts with DRG1 (via its N-terminal); the interaction phosphorylates DRG1. Post-translationally, mainly autophosphorylated on serine/threonine residues. Also autophosphorylated on Tyr-198. In terms of tissue distribution, ubiquitously expressed at low levels. Relatively higher levels in testis, kidney and liver.

Its subcellular location is the cytoplasm. The protein localises to the perinuclear region. It is found in the membrane. The enzyme catalyses L-seryl-[protein] + ATP = O-phospho-L-seryl-[protein] + ADP + H(+). The catalysed reaction is L-threonyl-[protein] + ATP = O-phospho-L-threonyl-[protein] + ADP + H(+). It carries out the reaction L-tyrosyl-[protein] + ATP = O-phospho-L-tyrosyl-[protein] + ADP + H(+). Functionally, membrane-associated protein kinase that phosphorylates on serine and threonine residues. In vitro substrates include DRG1, ENO1 and EIF4EBP1. Also autophosphorylates. May be involved in secretory vesicle trafficking or intracellular signaling. May have a role in regulating stromal-epithelial interactions that occur during ductal morphogenesis in the mammary gland. May be involved in TGF-beta signaling. Able to autophosphorylate on Tyr residue; it is however unclear whether it has tyrosine-protein kinase toward other proteins. In Mus musculus (Mouse), this protein is Serine/threonine-protein kinase 16 (Stk16).